We begin with the raw amino-acid sequence, 467 residues long: Probable protein phosphatase 2C 6 (467 aa).

Residues 61 to 81 (VEDDAVAPGRGEEGGEASAVG) form a disordered region. A PPM-type phosphatase domain is found at 149–457 (LWGHKSICGR…DNISVIVVDL (309 aa)). Mn(2+)-binding residues include Asp205, Gly206, Asp386, and Asp448.

This sequence belongs to the PP2C family. As to quaternary structure, interacts with PYL9. The cofactor is Mg(2+). It depends on Mn(2+) as a cofactor.

It localises to the nucleus. The protein localises to the cytoplasm. It is found in the cytosol. The enzyme catalyses O-phospho-L-seryl-[protein] + H2O = L-seryl-[protein] + phosphate. The catalysed reaction is O-phospho-L-threonyl-[protein] + H2O = L-threonyl-[protein] + phosphate. Probable protein phosphatase that may function in abscisic acid (ABA) signaling. In Oryza sativa subsp. japonica (Rice), this protein is Probable protein phosphatase 2C 6.